The sequence spans 203 residues: Ribosome maturation factor RimP (203 aa).

The disordered stretch occupies residues 183-203; the sequence is FDDIETEGSAEGTTGSEEENK.

The protein belongs to the RimP family.

It is found in the cytoplasm. Required for maturation of 30S ribosomal subunits. The polypeptide is Ribosome maturation factor RimP (Ruegeria sp. (strain TM1040) (Silicibacter sp.)).